The sequence spans 227 residues: Protein FAM3C (227 aa).

An N-terminal signal peptide occupies residues 1 to 24 (MRVAGAAKLVVAVAVFLLTFYVIS). 2 cysteine pairs are disulfide-bonded: Cys-58/Cys-86 and Cys-64/Cys-221. The GG-type lectin domain occupies 67–225 (KHFAFKMASG…VEMEGCIPQK (159 aa)).

This sequence belongs to the FAM3 family.

It is found in the secreted. The protein resides in the cytoplasmic vesicle. Functionally, may be involved in retinal laminar formation. Promotes epithelial to mesenchymal transition. The polypeptide is Protein FAM3C (FAM3C) (Bos taurus (Bovine)).